Here is a 1292-residue protein sequence, read N- to C-terminus: Zinc finger CCCH domain-containing protein 44 (1292 aa).

A compositionally biased stretch (polar residues) spans M1–Q10. Disordered stretches follow at residues M1–S24 and I72–D107. A PHD-type zinc finger spans residues E110–S176. Disordered regions lie at residues P256–A313 and K401–P426. The SWIB/MDM2 domain maps to A313 to I396. A compositionally biased stretch (polar residues) spans K404–V414. One can recognise a Plus3 domain in the interval A453–I586. 4 disordered regions span residues P624–P731, T777–P832, D876–S915, and T1170–R1245. Low complexity predominate over residues Q661–Q675. The span at V689–K698 shows a compositional bias: basic and acidic residues. A compositionally biased stretch (polar residues) spans V699–E708. The GYF domain occupies S716 to A770. The segment covering V813–S829 has biased composition (low complexity). 2 stretches are compositionally biased toward polar residues: residues G882–K899 and N906–S915. 2 stretches are compositionally biased toward low complexity: residues S1188–G1206 and N1231–N1244. The C3H1-type zinc finger occupies P1267–P1292.

The chain is Zinc finger CCCH domain-containing protein 44 from Arabidopsis thaliana (Mouse-ear cress).